The primary structure comprises 203 residues: Snake venom metalloproteinase fibrolase (203 aa).

The residue at position 1 (Gln1) is a Pyrrolidone carboxylic acid. Residues 7-203 form the Peptidase M12B domain; that stretch reads RYVQLVIVAD…NNPQCILNKP (197 aa). Disulfide bonds link Cys118-Cys198, Cys158-Cys182, and Cys160-Cys165. Zn(2+) is bound at residue His143. Residue Glu144 is part of the active site. The Zn(2+) site is built by His147 and His153.

The protein belongs to the venom metalloproteinase (M12B) family. P-I subfamily. Monomer. It depends on Zn(2+) as a cofactor. Expressed by the venom gland.

It is found in the secreted. It catalyses the reaction Hydrolysis of 14-Ala-|-Leu-15 in insulin B chain and 413-Lys-|-Leu-414 in alpha-chain of fibrinogen.. Is inhibited by EDTA, o-phenanthroline and tetraethylenepentamine. Functionally, snake venom zinc metalloprotease that exhibits direct fibrinolytic activity. The protein is Snake venom metalloproteinase fibrolase of Agkistrodon contortrix contortrix (Southern copperhead).